The following is a 104-amino-acid chain: Large ribosomal subunit protein uL24 (104 aa).

It belongs to the universal ribosomal protein uL24 family. Part of the 50S ribosomal subunit.

Functionally, one of two assembly initiator proteins, it binds directly to the 5'-end of the 23S rRNA, where it nucleates assembly of the 50S subunit. One of the proteins that surrounds the polypeptide exit tunnel on the outside of the subunit. This chain is Large ribosomal subunit protein uL24, found in Halothermothrix orenii (strain H 168 / OCM 544 / DSM 9562).